Reading from the N-terminus, the 630-residue chain is A-type voltage-gated potassium channel KCND2 (630 aa).

Topologically, residues 1–184 are cytoplasmic; the sequence is MAAGVAAWLP…FENPHTSTMA (184 aa). An interaction with KCNIP1, KCNIP2, and other family members region spans residues 2-20; the sequence is AAGVAAWLPFARAAAIGWM. Phosphothreonine is present on T38. The tract at residues 71–90 is interaction with KCNIP1; that stretch reads ERDFFYHPETQQYFFDRDPD. Zn(2+) contacts are provided by H105, C111, C132, and C133. The helical transmembrane segment at 185–206 threads the bilayer; sequence LVFYYVTGFFIAVSVIANVVET. Residues 207 to 226 are Extracellular-facing; it reads VPCGSSPGHIKELPCGERYA. Residues 227-249 form a helical membrane-spanning segment; it reads VAFFCLDTACVMIFTVEYLLRLA. Over 250–256 the chain is Cytoplasmic; it reads AAPSRYR. Residues 257–281 form a helical membrane-spanning segment; the sequence is FVRSVMSIIDVVAILPYYIGLVMTD. At 282–287 the chain is on the extracellular side; it reads NEDVSG. Residues 288–307 form a helical; Voltage-sensor membrane-spanning segment; that stretch reads AFVTLRVFRVFRIFKFSRHS. Residues 308 to 321 are Cytoplasmic-facing; it reads QGLRILGYTLKSCA. Positions 308 to 321 are S4-S5 linker; the sequence is QGLRILGYTLKSCA. Residues 322–345 traverse the membrane as a helical segment; sequence SELGFLLFSLTMAIIIFATVMFYA. The Extracellular segment spans residues 346–357; sequence EKGSSASKFTSI. The helical intramembrane region spans 358–369; that stretch reads PAAFWYTIVTMT. The K(+) site is built by T370, L371, G372, and Y373. The Selectivity filter motif lies at 370–375; the sequence is TLGYGD. The stretch at 370–377 is an intramembrane region; it reads TLGYGDMV. Residues 378–380 are Extracellular-facing; it reads PKT. The chain crosses the membrane as a helical span at residues 381–403; the sequence is IAGKIFGSICSLSGVLVIALPVP. Residues 404 to 630 lie on the Cytoplasmic side of the membrane; the sequence is VIVSNFSRIY…GGNIVRVSAL (227 aa). S438 carries the post-translational modification Phosphoserine. The interval 474–489 is required for dendritic targeting; sequence FETQHHHLLHCLEKTT. Positions 474-630 are important for normal channel activation and inactivation, for interaction with KCNIP2, and probably other family members as well; that stretch reads FETQHHHLLH…GGNIVRVSAL (157 aa). 4 positions are modified to phosphoserine: S548, S552, S572, and S575. Residues 600–630 form a disordered region; sequence IPTPPVTTPEGDDRPESPEYSGGNIVRVSAL. 2 positions are modified to phosphothreonine: T602 and T607. S616 carries the post-translational modification Phosphoserine. Positions 627 to 630 match the PDZ-binding motif; it reads VSAL.

This sequence belongs to the potassium channel family. D (Shal) (TC 1.A.1.2) subfamily. Kv4.2/KCND2 sub-subfamily. Homotetramer or heterotetramer with KCND1 or KCND3. Associates with the regulatory subunits KCNIP2, KCNIP3 and KCNIP4. Interacts with the regulatory subunit KCNIP1; this interaction mediates the capture of both the N- and C-terminus of KCND2, preventing N-type inactivation and stabilizing the S6 conformation, thereby accelerating closed state inactivation and recovery. In vivo, probably exists as heteromeric complex containing variable proportions of KCND1, KCND2, KCND3, KCNIP1, KCNIP2, KCNIP3, KCNIP4, DPP6 and DPP10. The tetrameric channel can associate with up to four regulatory subunits, such as KCNIP2 or KCNIP4. Interaction with four KCNIP4 chains does not reduce interaction with DPP10. Interacts with DLG4 and NCS1/FREQ. Interacts with DLG1. Probably part of a complex consisting of KCNIP1, KCNIP2 isoform 3 and KCND2. Interacts with FLNA, FLNC and DPP10. Interacts (via S1 and S2 helices) with DPP6; this interaction stabilizes the conformation of the S1-S2 helices and facilitates S4 conformational change, including S4 sliding up and down, thereby accelerating activation, inactivation, and recovery. Post-translationally, phosphorylation at Ser-438 in response to MAPK activation is increased in stimulated dendrites. Interaction with KCNIP2 and DPP6 propomtes phosphorylation by PKA at Ser-552. Phosphorylation at Ser-552 has no effect on interaction with KCNIP3, but is required for the regulation of channel activity by KCNIP3. Phosphorylation at Ser-552 leads to KCND2 internalization. Phosphorylated by MAPK in response to signaling via the metabotropic glutamate receptor GRM5. Phosphorylation at Ser-616 is required for the down-regulation of neuronal A-type currents in response to signaling via GRM5. In terms of tissue distribution, detected in ovary, in corpus luteum and in granulosa and theca cells in the follicle (at protein level). Highly expressed throughout the brain. Detected in amygdala, caudate nucleus, cerebellum, hippocampus, substantia nigra and thalamus. Expression is not detectable or very low in heart, kidney, liver, lung, pancreas and skeletal muscle. Not detectable in human heart atrium.

Its subcellular location is the cell membrane. The protein localises to the cell projection. It is found in the dendrite. It localises to the synapse. The protein resides in the perikaryon. Its subcellular location is the postsynaptic cell membrane. The protein localises to the dendritic spine. It is found in the cell junction. The enzyme catalyses K(+)(in) = K(+)(out). Its function is as follows. Voltage-gated potassium channel that mediates transmembrane potassium transport in excitable membranes, primarily in the brain. Mediates the major part of the dendritic A-type current I(SA) in brain neurons. This current is activated at membrane potentials that are below the threshold for action potentials. It regulates neuronal excitability, prolongs the latency before the first spike in a series of action potentials, regulates the frequency of repetitive action potential firing, shortens the duration of action potentials and regulates the back-propagation of action potentials from the neuronal cell body to the dendrites. Contributes to the regulation of the circadian rhythm of action potential firing in suprachiasmatic nucleus neurons, which regulates the circadian rhythm of locomotor activity. Functions downstream of the metabotropic glutamate receptor GRM5 and plays a role in neuronal excitability and in nociception mediated by activation of GRM5. Mediates the transient outward current I(to) in rodent heart left ventricle apex cells, but not in human heart, where this current is mediated by another family member. Forms tetrameric potassium-selective channels through which potassium ions pass in accordance with their electrochemical gradient. The channel alternates between opened and closed conformations in response to the voltage difference across the membrane. Can form functional homotetrameric channels and heterotetrameric channels that contain variable proportions of KCND2 and KCND3; channel properties depend on the type of pore-forming alpha subunits that are part of the channel. In vivo, membranes probably contain a mixture of heteromeric potassium channel complexes. Interaction with specific isoforms of the regulatory subunits KCNIP1, KCNIP2, KCNIP3 or KCNIP4 strongly increases expression at the cell surface and thereby increases channel activity; it modulates the kinetics of channel activation and inactivation, shifts the threshold for channel activation to more negative voltage values, shifts the threshold for inactivation to less negative voltages and accelerates recovery after inactivation. Likewise, interaction with DPP6 or DPP10 promotes expression at the cell membrane and regulates both channel characteristics and activity. Upon depolarization, the channel goes from a resting closed state (C state) to an activated but non-conducting state (C* state), from there, the channel may either inactivate (I state) or open (O state). The sequence is that of A-type voltage-gated potassium channel KCND2 from Homo sapiens (Human).